The primary structure comprises 481 residues: Zinc metalloproteinase/disintegrin (481 aa).

The N-terminal stretch at 1–20 is a signal peptide; it reads MIEVLLVTICLAVFPYQGSS. Positions 21–189 are excised as a propeptide; sequence IILESGNVND…KKASQLYLTP (169 aa). At Glu-190 the chain carries Pyrrolidone carboxylic acid (Glu). Residues 197–392 enclose the Peptidase M12B domain; that stretch reads RYIKLAIVVD…DNPQCILNAP (196 aa). 296–299 contributes to the an L-amino acid tripeptide binding site; that stretch reads RNTI. Disulfide bonds link Cys-308-Cys-387, Cys-349-Cys-371, and Cys-351-Cys-354. His-333 lines the Zn(2+) pocket. Residue Glu-334 is part of the active site. Zn(2+) contacts are provided by His-337 and His-343. An L-amino acid tripeptide is bound at residue Ser-357. A propeptide spanning residues 393–410 is cleaved from the precursor; that stretch reads LRTDTVSTPVSGNEFLEA. One can recognise a Disintegrin domain in the interval 400–481; the sequence is TPVSGNEFLE…ADCPRNGLYG (82 aa). Intrachain disulfides connect Cys-414-Cys-429, Cys-416-Cys-424, Cys-423-Cys-446, Cys-437-Cys-443, Cys-442-Cys-467, and Cys-455-Cys-474. The Cell attachment site motif lies at 459 to 461; it reads RGD.

It belongs to the venom metalloproteinase (M12B) family. P-II subfamily. P-IIa sub-subfamily. As to quaternary structure, monomer. Requires Zn(2+) as cofactor. The N-terminus is blocked. Expressed by the venom gland.

The protein localises to the secreted. With respect to regulation, inhibited by EDTA and 1,10-phenanthroline. Is also inhibited by endogenous tripeptide inhibitors pyroGlu-Asn-Trp, pyroGlu-Gln-Trp, and pyroGlu-Lys-Trp. In terms of biological role, potent fibrinogenolytic protease which cleaves mainly the Aalpha chain of fibrinogen (FGA) and slightly the Bbeta (FGB) and the gamma (FGG) chains. May possess hemorrhagic activity. Compared to other SVMP, the substrate-binding pocket is relatively shallow. Is less susceptible to tripeptide inhibitors than TM-1 (AC U3KRG1) and TM-2. Inhibits platelet aggregation induced by ADP, thrombin, platelet-activating factor and collagen. Acts by inhibiting fibrinogen interaction with platelet receptors GPIIb/GPIIIa (ITGA2B/ITGB3). The chain is Zinc metalloproteinase/disintegrin from Protobothrops mucrosquamatus (Taiwan habu).